The chain runs to 529 residues: MLDSTPMLAFIIGLLLLALTMKRKEKKKTMLISPTRNLSLPPGPKSWPLIGNLPEILGRNKPVFRWIHSLMKELNTDIACIRLANTHVIPVTSPRIAREILKKQDSVFATRPLTMGTEYCSRGYLTVAVEPQGEQWKKMRRVVASHVTSKKSFQMMLQKRTEEADNLVRYINNRSVKNRGNAFVVIDLRLAVRQYSGNVARKMMFGIRHFGKGSEDGSGPGLEEIEHVESLFTVLTHLYAFALSDYVPWLRFLDLEGHEKVVSNAMRNVSKYNDPFVDERLMQWRNGKMKEPQDFLDMFIIAKDTDGKPTLSDEEIKAQVTELMLATVDNPSNAAEWGMAEMINEPSIMQKAVEEIDRVVGKDRLVIESDLPNLNYVKACVKEAFRLHPVAPFNLPHMSTTDTVVDGYFIPKGSHVLISRMGIGRNPSVWDKPHKFDPERHLSTNTCVDLNESDLNIISFSAGRRGCMGVDIGSAMTYMLLARLIQGFTWLPVPGKNKIDISESKNDLFMAKPLYAVATPRLAPHVYPT.

Residues 1–21 (MLDSTPMLAFIIGLLLLALTM) traverse the membrane as a helical segment. Heme is bound at residue Cys-467.

It belongs to the cytochrome P450 family. Requires heme as cofactor.

The protein resides in the endoplasmic reticulum membrane. It carries out the reaction L-phenylalanine + 2 reduced [NADPH--hemoprotein reductase] + 2 O2 = (E)-phenylacetaldehyde oxime + 2 oxidized [NADPH--hemoprotein reductase] + CO2 + 3 H2O + 2 H(+). It participates in secondary metabolite biosynthesis; phenylglucosinolate biosynthesis. In terms of biological role, converts L-phenylalanine into phenylacetaldoxime, the precursor of benzylglucosinolate (glucotropeolin). The chain is Phenylalanine N-monooxygenase (CYP79A2) from Arabidopsis thaliana (Mouse-ear cress).